Consider the following 107-residue polypeptide: IQ domain-containing protein F6 (107 aa).

The region spanning 42–71 is the IQ domain; the sequence is QEWAVVKVQAQVRMWQARRRFLQARQAACI.

This chain is IQ domain-containing protein F6 (IQCF6), found in Homo sapiens (Human).